Here is a 470-residue protein sequence, read N- to C-terminus: Aminoacyl transferase sphA (470 aa).

3 residues coordinate pyridoxal 5'-phosphate: Ser-212, His-244, and Thr-272. Position 275 is an N6-(pyridoxal phosphate)lysine (Lys-275).

The protein belongs to the class-II pyridoxal-phosphate-dependent aminotransferase family. BioF subfamily. In terms of assembly, homodimer. Pyridoxal 5'-phosphate is required as a cofactor.

It carries out the reaction aminomalonate + (3R)-hydroxyoctadeca-4,10-dienoyl-[ACP] = 3-oxopresphingofungin + holo-[ACP] + CO2. Its pathway is secondary metabolite biosynthesis. In terms of biological role, aminoacyl transferase; part of the gene cluster that mediates the biosynthesis of sphingofungins, bioactive molecules acting as sphingolipid inhibitors via inhibiting serine palmitoyl transferase (SPT). Within the pathway, sphA transfers aminomalonate onto the sphB product 3-hydroxyoctadeca-4,10-dienoyl-ACP to produce 3-keto-presphingofungin. The substrate specificity of sphA using only aminomalonate in Aspergillus fumigatus is responsible for the biosynthesis of sphingofungins B and C but not E and F like in Byssochlamys spectabilis. The PKS sphB does not contain any putative thioesterase domain for releasing the nascent polyketide chain and it has been suggested that aminoacyl transferases can facilitate the polyketide chain release. Sphingofungin biosynthesis starts with the PKS sphB that produces an C18 polyketide precursor 3-hydroxyoctadeca-4,10-dienoyl-ACP containing one delta-6 desaturation and one delta-12 desaturation. The aminoacyl transferase sphA uses the sphB product to produce 3-keto-presphingofungin by adding an aminomalonate molecule. SphF then reduces the C-3 ketone of 3-keto-presphingofungin which leads to presphingofungin. The cytochrome P450 monooxygenase sphH converts presphingofungin into sphingofungin B1 which is further converted to sphingofungin B by the dioxygenase sphC. SphC is also able to convert presphingofungin into sphingofungin B2. The acetyltransferase sphE acetylates sphingofungin B to produce sphingofungin C, but can also convert sphingofungin B1 into sphingofungin C1 and sphingofungin B2 into sphingofungin C2. Finally, sphingofungin C can be spontaneously converted into sphingofungin D. The chain is Aminoacyl transferase sphA from Aspergillus fumigatus (strain CBS 144.89 / FGSC A1163 / CEA10) (Neosartorya fumigata).